Consider the following 275-residue polypeptide: MTLQQQIIKVLGAKPQINAEEEIRRSIDFLKSYLQTYPFIKSLVLGISGGQDSTLAGKLCQMAINELRQETGNESLQFIAVRLPYGVQADEQDCQDAIAFIQPDRVLTVNIKGAVLASEQALREAGIELSDFVRGNEKARERMKAQYSIAGMTSGVVVGTDHAAEAITGFFTKYGDGGTDINPLYRLNKRQGKQLLAALGCPEHLYKKAPTADLEDDRPSLPDEVALGVTYDNIDDYLEGKNVPEQVARTIENWYLKTEHKRRPPITVFDDFWKK.

Gly-46 to Ser-53 contacts ATP. A Mg(2+)-binding site is contributed by Asp-52. Arg-140 contributes to the deamido-NAD(+) binding site. Thr-160 provides a ligand contact to ATP. Residue Glu-165 participates in Mg(2+) binding. Residues Lys-173 and Asp-180 each coordinate deamido-NAD(+). ATP-binding residues include Lys-189 and Thr-211. His-260–Lys-261 serves as a coordination point for deamido-NAD(+).

This sequence belongs to the NAD synthetase family. In terms of assembly, homodimer.

It catalyses the reaction deamido-NAD(+) + NH4(+) + ATP = AMP + diphosphate + NAD(+) + H(+). It functions in the pathway cofactor biosynthesis; NAD(+) biosynthesis; NAD(+) from deamido-NAD(+) (ammonia route): step 1/1. In terms of biological role, catalyzes the ATP-dependent amidation of deamido-NAD to form NAD. Uses ammonia as a nitrogen source. The sequence is that of NH(3)-dependent NAD(+) synthetase from Escherichia coli O45:K1 (strain S88 / ExPEC).